Reading from the N-terminus, the 319-residue chain is Syntaxin ufe1 (319 aa).

Residues 1-297 lie on the Cytoplasmic side of the membrane; sequence MTSRTNEFFG…IKAKSRSSRT (297 aa). Residues 228-290 enclose the t-SNARE coiled-coil homology domain; sequence LQEFEHTMER…SGGNQQLIKA (63 aa). Residues 298–315 form a helical; Anchor for type IV membrane protein membrane-spanning segment; sequence ARLLFCIFTVMGLLLLSL. Topologically, residues 316 to 319 are lumenal; that stretch reads DRIV.

This sequence belongs to the syntaxin family. As to quaternary structure, component of a SNARE complex consisting of ufe1, use1, sec20 and sec22 or ykt6. Interacts with sad1.

Its subcellular location is the endoplasmic reticulum membrane. In terms of biological role, syntaxin required for targeting and fusion of Golgi-derived retrograde transport vesicles with the ER. The protein is Syntaxin ufe1 (ufe1) of Schizosaccharomyces pombe (strain 972 / ATCC 24843) (Fission yeast).